The following is a 402-amino-acid chain: DNA polymerase IV (402 aa).

The UmuC domain maps to 5-187 (ILLADMNSFY…LPVRELFGVG (183 aa)). Residues aspartate 9 and aspartate 105 each contribute to the Mg(2+) site. Glutamate 106 is an active-site residue.

This sequence belongs to the DNA polymerase type-Y family. In terms of assembly, monomer. Mg(2+) is required as a cofactor.

The protein localises to the cytoplasm. It carries out the reaction DNA(n) + a 2'-deoxyribonucleoside 5'-triphosphate = DNA(n+1) + diphosphate. In terms of biological role, poorly processive, error-prone DNA polymerase involved in untargeted mutagenesis. Copies undamaged DNA at stalled replication forks, which arise in vivo from mismatched or misaligned primer ends. These misaligned primers can be extended by PolIV. Exhibits no 3'-5' exonuclease (proofreading) activity. May be involved in translesional synthesis, in conjunction with the beta clamp from PolIII. The protein is DNA polymerase IV of Pelotomaculum thermopropionicum (strain DSM 13744 / JCM 10971 / SI).